The primary structure comprises 248 residues: Chitin deacetylase (248 aa).

A signal peptide spans 1–26; the sequence is MHFSTLFGAAATAALAGSTNASPLAR. Disulfide bonds link cysteine 38/cysteine 237 and cysteine 148/cysteine 152. Residues 42–232 form the NodB homology domain; it reads GLVALTYDDG…TLKSKGYRAV (191 aa). The active-site Proton acceptor is aspartate 49. Aspartate 49 serves as a coordination point for acetate. Positions 50, 104, and 108 each coordinate Co(2+). Tyrosine 145 is an acetate binding site. Catalysis depends on histidine 206, which acts as the Proton donor.

Belongs to the polysaccharide deacetylase family. Monomer. Co(2+) is required as a cofactor. Post-translationally, N-glycosylated.

Its subcellular location is the secreted. It carries out the reaction [(1-&gt;4)-N-acetyl-beta-D-glucosaminyl](n) + n H2O = chitosan + n acetate. In terms of biological role, hydrolyzes the N-acetamido groups of N-acetyl-D-glucosamine polymers in chitin to form chitosan and acetate. May play a role in evasion of the host immune response; plant chitinases liberate chitin molecules from the fungal cell wall which act as elicitors of the plant immune response, deacetylation of the liberated chitin neutralizes elicitor activity. The chain is Chitin deacetylase from Colletotrichum lindemuthianum (Bean anthracnose fungus).